The primary structure comprises 329 residues: Homeobox protein ceh-40 (329 aa).

The PBC domain occupies 3–186 (EASKSIMDLL…VIQLKKRYLD (184 aa)). The segment at 10 to 90 (DLLSEVVKIT…EGVAGPDDSL (81 aa)) is PBC-A. Positions 93–186 (IQEAAGTDQY…VIQLKKRYLD (94 aa)) are PBC-B. A DNA-binding region (homeobox; TALE-type) is located at residues 187–249 (ARRKRRNFSK…NKRIRYKKTM (63 aa)). Positions 248–275 (TMAKNEDERRENRKPEDRPPPGAPGAPY) are disordered. Positions 250-266 (AKNEDERRENRKPEDRP) are enriched in basic and acidic residues.

This sequence belongs to the TALE/PBX homeobox family. In terms of tissue distribution, expressed in head dopaminergic neurons.

The protein localises to the nucleus. Functionally, plays a role in regulating gene expression in dopaminergic neurons, acting redundantly with homeobox protein ceh-20 in head neurons. May activate dopamine pathway genes in concert with ETS domain-containing protein ast-1, and homeobox proteins ceh-43 and ceh-20. The chain is Homeobox protein ceh-40 (ceh-40) from Caenorhabditis elegans.